We begin with the raw amino-acid sequence, 370 residues long: tRNA/tmRNA (uracil-C(5))-methyltransferase (370 aa).

S-adenosyl-L-methionine-binding residues include Q190, Y218, N223, E239, and D299. The active-site Nucleophile is C324. E358 acts as the Proton acceptor in catalysis.

Belongs to the class I-like SAM-binding methyltransferase superfamily. RNA M5U methyltransferase family. TrmA subfamily.

It carries out the reaction uridine(54) in tRNA + S-adenosyl-L-methionine = 5-methyluridine(54) in tRNA + S-adenosyl-L-homocysteine + H(+). The enzyme catalyses uridine(341) in tmRNA + S-adenosyl-L-methionine = 5-methyluridine(341) in tmRNA + S-adenosyl-L-homocysteine + H(+). Functionally, dual-specificity methyltransferase that catalyzes the formation of 5-methyluridine at position 54 (m5U54) in all tRNAs, and that of position 341 (m5U341) in tmRNA (transfer-mRNA). The protein is tRNA/tmRNA (uracil-C(5))-methyltransferase of Sodalis glossinidius (strain morsitans).